We begin with the raw amino-acid sequence, 208 residues long: MTKVLFVKANNRPAEQAVSVKLYEAFLASYKEAHPNDTVVELDLYKEELPYVGVDMINGTFKAGKGFDLTEEEAKAVAVADKYLNQFLEADKVVFGFPLWNLTIPAVLHTYIDYLNRAGKTFKYTPEGPVGLIGDKKIALLNARGGVYSEGPAAEVEMAVKYVASMMGFFGATNMETVVIEGHNQFPDKAEEIITAGLEEAAKVANKF.

Belongs to the azoreductase type 1 family. In terms of assembly, homodimer. It depends on FMN as a cofactor.

It catalyses the reaction 2 a quinone + NADH + H(+) = 2 a 1,4-benzosemiquinone + NAD(+). The catalysed reaction is N,N-dimethyl-1,4-phenylenediamine + anthranilate + 2 NAD(+) = 2-(4-dimethylaminophenyl)diazenylbenzoate + 2 NADH + 2 H(+). Quinone reductase that provides resistance to thiol-specific stress caused by electrophilic quinones. Its function is as follows. Also exhibits azoreductase activity. Catalyzes the reductive cleavage of the azo bond in aromatic azo compounds to the corresponding amines. In Bacillus anthracis, this protein is FMN-dependent NADH:quinone oxidoreductase 4.